The chain runs to 411 residues: Translation initiation factor 2 subunit gamma (411 aa).

The tr-type G domain maps to 9–203; sequence QAEVNIGMVG…AIEEFIPTPK (195 aa). The segment at 18–25 is G1; the sequence is GHVDHGKT. Mg(2+) is bound by residues Asp-21, Thr-25, Gly-46, and Thr-48. 21–26 serves as a coordination point for GTP; it reads DHGKTT. The tract at residues 46–50 is G2; that stretch reads GITIK. The Zn(2+) site is built by Cys-61, Cys-64, Cys-73, and Cys-76. A G3 region spans residues 90–93; the sequence is DSPG. GTP is bound by residues 146-149 and 181-183; these read NKIE and SAL. Positions 146-149 are G4; that stretch reads NKIE. Residues 181–183 form a G5 region; sequence SAL.

The protein belongs to the TRAFAC class translation factor GTPase superfamily. Classic translation factor GTPase family. EIF2G subfamily. Heterotrimer composed of an alpha, a beta and a gamma chain. Requires Mg(2+) as cofactor.

The catalysed reaction is GTP + H2O = GDP + phosphate + H(+). Its function is as follows. eIF-2 functions in the early steps of protein synthesis by forming a ternary complex with GTP and initiator tRNA. In Pyrococcus furiosus (strain ATCC 43587 / DSM 3638 / JCM 8422 / Vc1), this protein is Translation initiation factor 2 subunit gamma.